The sequence spans 373 residues: Chaperone protein DnaJ (373 aa).

In terms of domain architecture, J spans 4–68; the sequence is NYYQILGVSK…QKRAAYDRLG (65 aa). The segment at 136-214 adopts a CR-type zinc-finger fold; that stretch reads GIEKNISFSS…CHGMGRYHKQ (79 aa). Residues cysteine 149, cysteine 152, cysteine 166, cysteine 169, cysteine 188, cysteine 191, cysteine 202, and cysteine 205 each coordinate Zn(2+). CXXCXGXG motif repeat units follow at residues 149 to 156, 166 to 173, 188 to 195, and 202 to 209; these read CDTCHGSG, CDACSGVG, CHKCQGNG, and CKKCHGMG.

Belongs to the DnaJ family. As to quaternary structure, homodimer. Requires Zn(2+) as cofactor.

The protein localises to the cytoplasm. Its function is as follows. Participates actively in the response to hyperosmotic and heat shock by preventing the aggregation of stress-denatured proteins and by disaggregating proteins, also in an autonomous, DnaK-independent fashion. Unfolded proteins bind initially to DnaJ; upon interaction with the DnaJ-bound protein, DnaK hydrolyzes its bound ATP, resulting in the formation of a stable complex. GrpE releases ADP from DnaK; ATP binding to DnaK triggers the release of the substrate protein, thus completing the reaction cycle. Several rounds of ATP-dependent interactions between DnaJ, DnaK and GrpE are required for fully efficient folding. Also involved, together with DnaK and GrpE, in the DNA replication of plasmids through activation of initiation proteins. This is Chaperone protein DnaJ from Rickettsia africae (strain ESF-5).